The primary structure comprises 305 residues: MQSILWFALIASVVFLVLVDLASGLNGLETLSSGADVDELTTATRLLRAAHLDRKLSEERAFISGESIGSWWTKVTEWLRVKFELIIAYIKQLRVKSNDVKDDAATNDAAHAKDDAAANKAARAKDDASRATYEAARANYEAARAYDDATRAQDVAALEAARAIEATDIAAYTGANAEYEQSMFLNGFVKTIDLHNEKNAPIMTRLNKSLDEAKKSSTFREIADGVNESKVALVVHEKQDGYLLWILHLKWAVEAKSPKDVVERILKDLGTHDVPHLQERAEQVKKAYTIFLLYVERMSRATHPK.

An N-terminal signal peptide occupies residues 1–24; the sequence is MQSILWFALIASVVFLVLVDLASG. The RxLR-dEER signature appears at 45-60; the sequence is RLLRAAHLDRKLSEER. Asn-207 and Asn-227 each carry an N-linked (GlcNAc...) asparagine glycan. A w motif region spans residues 247–269; that stretch reads LHLKWAVEAKSPKDVVERILKDL.

The protein belongs to the RxLR effector family. In terms of assembly, interacts with host A.thaliana At1G14340.

It is found in the secreted. Its subcellular location is the host cell membrane. Secreted effector that confers enhanced plant susceptibility during both compatible and incompatible interactions between the pathogen and its host. Promotes the sexual reproduction of the pathogen in the plant host. This Hyaloperonospora arabidopsidis (strain Emoy2) (Downy mildew agent) protein is RxLR effector protein 17.